Reading from the N-terminus, the 636-residue chain is Receptor-like kinase LIP1 (636 aa).

The disordered stretch occupies residues 18–57; that stretch reads NAPCTTNETNDDNVEHDEFRPPVVATTKRTEEREPAEQQP. In terms of domain architecture, Protein kinase spans 74 to 352; that stretch reads FRQECLLGEG…SDVMVALSFL (279 aa). ATP contacts are provided by residues 80-88 and K103; that span reads LGEGGFGRV. Residue D201 is the Proton acceptor of the active site. Phosphoserine occurs at positions 205 and 236. Residue T242 is modified to Phosphothreonine. Y250 carries the phosphotyrosine modification. A disordered region spans residues 389 to 636; that stretch reads FCISRKDVGN…EEEHISSDHD (248 aa). The stretch at 403–434 forms a coiled coil; the sequence is SSDSEDEEEEKEQKAEKEEESTSKKRQEQEET. Over residues 413–431 the composition is skewed to basic and acidic residues; the sequence is KEQKAEKEEESTSKKRQEQ. Residues 432–455 show a composition bias toward acidic residues; the sequence is EETATDSDDESDSNSEKDQEEEQS. Residues 480 to 489 show a composition bias toward polar residues; it reads TNATAQSLKI. Composition is skewed to basic and acidic residues over residues 522-531 and 554-566; these read DSGRDHDDSS and HETR…DDSP. Residues 567 to 576 show a composition bias toward polar residues; sequence RNTSMRINSL. 2 stretches are compositionally biased toward basic and acidic residues: residues 588 to 603 and 619 to 636; these read NHQT…KSED and SLHR…SDHD.

This sequence belongs to the protein kinase superfamily. Ser/Thr protein kinase family. In terms of assembly, interacts with PRK6. Palmitoylated. Expressed in mature pollen and in germinating pollen tubes.

Its subcellular location is the cell membrane. It is found in the cytoplasm. Its function is as follows. Involved in pollen tube guidance into micropyle. Participates in perception of the ovule-secreted peptide signal LURE1. In Arabidopsis thaliana (Mouse-ear cress), this protein is Receptor-like kinase LIP1.